We begin with the raw amino-acid sequence, 52 residues long: Disintegrin multisquamatin (52 aa).

The 50-residue stretch at 1-50 (EGEECESGPCCRNCKFLKEGTICKRARGDDMDDYCNGKTCDCPRNPHKGP) folds into the Disintegrin domain. Intrachain disulfides connect C5–C14, C10–C35, C11–C40, and C23–C42. A Cell attachment site motif is present at residues 27–29 (RGD).

Belongs to the venom metalloproteinase (M12B) family. P-II subfamily. P-IIa sub-subfamily. Monomer. In terms of tissue distribution, expressed by the venom gland.

It is found in the secreted. Functionally, inhibits ADP-induced human, canine and rabbit platelet aggregation by binding with high affinity to alpha-IIb/beta-3 (ITGA2B/ITGB3). The sequence is that of Disintegrin multisquamatin from Echis multisquamatus (Central Asian sand viper).